A 261-amino-acid polypeptide reads, in one-letter code: Phosphonates import ATP-binding protein PhnC (261 aa).

Positions 8 to 253 constitute an ABC transporter domain; it reads LRVENLSKTY…WFRRIYGEGA (246 aa). 41–48 lines the ATP pocket; that stretch reads GLSGSGKS.

This sequence belongs to the ABC transporter superfamily. Phosphonates importer (TC 3.A.1.9.1) family. As to quaternary structure, the complex is composed of two ATP-binding proteins (PhnC), two transmembrane proteins (PhnE) and a solute-binding protein (PhnD).

It is found in the cell inner membrane. The enzyme catalyses phosphonate(out) + ATP + H2O = phosphonate(in) + ADP + phosphate + H(+). Part of the ABC transporter complex PhnCDE involved in phosphonates import. Responsible for energy coupling to the transport system. This is Phosphonates import ATP-binding protein PhnC from Bdellovibrio bacteriovorus (strain ATCC 15356 / DSM 50701 / NCIMB 9529 / HD100).